We begin with the raw amino-acid sequence, 352 residues long: Membrane progestin receptor alpha (352 aa).

The Cytoplasmic portion of the chain corresponds to 1–75; it reads MATVVMEQIG…FLTLFQRHNE (75 aa). A helical membrane pass occupies residues 76–96; sequence TLNVWTHLLAAFIILVKWQEI. The Extracellular portion of the chain corresponds to 97-110; it reads SETVDFLRDPHAQP. Residues 111–131 form a helical membrane-spanning segment; the sequence is LFIVLLAAFTYLSFSALAHLL. Residues 132–139 are Cytoplasmic-facing; it reads SAKSELSY. Residues 140 to 160 form a helical membrane-spanning segment; that stretch reads YTFYFLDYVGVAVYQYGSALA. The Extracellular segment spans residues 161 to 175; sequence HYYYAIEKEWHTKVQ. A helical membrane pass occupies residues 176-196; it reads GLFLPAAAFLAWLTCFGCCYG. Residues 197–242 lie on the Cytoplasmic side of the membrane; the sequence is KYASPELPKVANKLFQVVPSALAYCLDISPVVHRIYSCYQEGCSDP. A helical membrane pass occupies residues 243–263; that stretch reads VVAYHFYHVVFFLIGAYFFCC. The Extracellular portion of the chain corresponds to 264–275; sequence PHPESLFPGKCD. A helical membrane pass occupies residues 276-296; the sequence is FIGQGHQLFHVFVVVCTLTQV. Residues 297–316 are Cytoplasmic-facing; sequence EALRTDFTERRPFYERLHGD. Residues 317-337 traverse the membrane as a helical segment; sequence LAHDAVALFIFTACCSALTAF. Residues 338-352 are Extracellular-facing; it reads YVRQRVRASLHEKGE.

It belongs to the ADIPOR family. Strongly expressed in ovary and brain; lower expression in testis and pituitary. Not detected in heart, kidney, spleen, intestine, gill and muscle.

It is found in the cell membrane. Steroid membrane receptor. Binds progesterone, progestin and 17-hydroxyprogesterone in vitro. Capable of mediating progestin-induced oocyte maturation. The polypeptide is Membrane progestin receptor alpha (mpra) (Cynoscion nebulosus (Spotted seatrout)).